The following is a 193-amino-acid chain: Orotate phosphoribosyltransferase (193 aa).

5-phospho-alpha-D-ribose 1-diphosphate-binding positions include Arg85, Lys89, His91, and 111–119; that span reads DDVLTTGKS. Orotate is bound by residues Thr115 and Arg143.

It belongs to the purine/pyrimidine phosphoribosyltransferase family. PyrE subfamily. As to quaternary structure, homodimer. The cofactor is Mg(2+).

It carries out the reaction orotidine 5'-phosphate + diphosphate = orotate + 5-phospho-alpha-D-ribose 1-diphosphate. Its pathway is pyrimidine metabolism; UMP biosynthesis via de novo pathway; UMP from orotate: step 1/2. Its function is as follows. Catalyzes the transfer of a ribosyl phosphate group from 5-phosphoribose 1-diphosphate to orotate, leading to the formation of orotidine monophosphate (OMP). The sequence is that of Orotate phosphoribosyltransferase from Pyrobaculum islandicum (strain DSM 4184 / JCM 9189 / GEO3).